The following is a 212-amino-acid chain: Pyridoxine/pyridoxamine 5'-phosphate oxidase (212 aa).

Residues 8–11 (RREY) and lysine 66 each bind substrate. FMN-binding positions include 61–66 (RIVLLK), 76–77 (FT), arginine 82, lysine 83, and glutamine 105. Positions 123, 127, and 131 each coordinate substrate. Residues 140 to 141 (QS) and tryptophan 185 each bind FMN. 191-193 (RLH) is a substrate binding site. Arginine 195 serves as a coordination point for FMN.

It belongs to the pyridoxamine 5'-phosphate oxidase family. In terms of assembly, homodimer. Requires FMN as cofactor.

It catalyses the reaction pyridoxamine 5'-phosphate + O2 + H2O = pyridoxal 5'-phosphate + H2O2 + NH4(+). The enzyme catalyses pyridoxine 5'-phosphate + O2 = pyridoxal 5'-phosphate + H2O2. Its pathway is cofactor metabolism; pyridoxal 5'-phosphate salvage; pyridoxal 5'-phosphate from pyridoxamine 5'-phosphate: step 1/1. The protein operates within cofactor metabolism; pyridoxal 5'-phosphate salvage; pyridoxal 5'-phosphate from pyridoxine 5'-phosphate: step 1/1. Its function is as follows. Catalyzes the oxidation of either pyridoxine 5'-phosphate (PNP) or pyridoxamine 5'-phosphate (PMP) into pyridoxal 5'-phosphate (PLP). This Shewanella sp. (strain ANA-3) protein is Pyridoxine/pyridoxamine 5'-phosphate oxidase.